Consider the following 347-residue polypeptide: Gamma-glutamyl hydrolase 2 (347 aa).

Residues 1–22 (MWSYVWLPLVALSLFKDSIIMA) form the signal peptide. Residues 45-341 (APDPNLNYRP…IGYDEVYIFT (297 aa)) form the Gamma-glutamyl hydrolase domain. The Nucleophile role is filled by Cys155. Catalysis depends on His268, which acts as the Proton donor.

It belongs to the peptidase C26 family. In terms of tissue distribution, expressed in roots, in leaves, stems and siliques.

The protein resides in the vacuole. The protein localises to the secreted. It localises to the extracellular space. It is found in the cell wall. It carries out the reaction (6S)-5,6,7,8-tetrahydrofolyl-(gamma-L-Glu)(n) + (n-1) H2O = (6S)-5,6,7,8-tetrahydrofolate + (n-1) L-glutamate. In terms of biological role, cleaves the polyglutamate sidechains of folate polyglutamates in the vacuole. Is important for polyglutamyl tail length determination before vacuolar exit. Plays a role on folate stability and intracellular folate content. Has endopeptidase activity against 4-amino-10-methylpteroyl penta-, tetra-, tri- and di-gamma-L-glutamate substrates and is responsible for the production of folic acid, also called pteroylglutamic acid (PteGlu) from teroylpolyglutamates. The polypeptide is Gamma-glutamyl hydrolase 2 (GGH2) (Arabidopsis thaliana (Mouse-ear cress)).